We begin with the raw amino-acid sequence, 64 residues long: Alpha-conotoxin Lt14.1 (64 aa).

Positions 1-20 (MKLSVMFIVFLMLTMPMTCA) are cleaved as a signal peptide. The propeptide occupies 21 to 50 (GISRSATNGGEADVRAHDKAANLMALLQER). Intrachain disulfides connect cysteine 52–cysteine 60 and cysteine 56–cysteine 63. At cysteine 63 the chain carries Cysteine amide.

The protein belongs to the conotoxin L superfamily. In terms of processing, may contain a 4-hydroxyproline. In terms of tissue distribution, expressed by the venom duct.

Its subcellular location is the secreted. Alpha-conotoxins act on postsynaptic membranes, they bind to the nicotinic acetylcholine receptors (nAChR) and thus inhibit them. This synthetic peptide displays analgesic activity in a hot plate assay. Analgesia is also observed against second phase pain in formalin-induced inflammatory pain model, and in a rat model of mechanically-induced pain. Effects downstream of nAChR are inhibition of calcium influx, inhibition of ERK1/2 phosphorylation and inhibition of c-fos/NOS expression. Genes associated with drug dependence are not up-regulated by this toxin. Treatment with this toxin reversed morphine withdrawal symptoms in mice. This chain is Alpha-conotoxin Lt14.1, found in Conus litteratus (Lettered cone).